We begin with the raw amino-acid sequence, 180 residues long: Pro-glucagon (180 aa).

The signal sequence occupies residues 1–20 (MKNIYIVAGFFVVLVQGSWQ). Residues 25–59 (DTEEKSRSFPASQTDPLEDPDQINEDKRHSQGTFT) are disordered. Phosphoserine is present on serine 54. Residues 84–89 (NRNNIA) constitute a propeptide that is removed on maturation. 2 positions are modified to phosphoserine: serine 105 and serine 108. Arginine 127 bears the Arginine amide mark. The propeptide occupies 131–145 (DFPEEVTIVEELGRR). 2 positions are modified to phosphoserine: serine 150 and serine 152.

Belongs to the glucagon family. Post-translationally, proglucagon is post-translationally processed in a tissue-specific manner in pancreatic A cells and intestinal L cells. In pancreatic A cells, the major bioactive hormone is glucagon cleaved by PCSK2/PC2. In the intestinal L cells PCSK1/PC1 liberates GLP-1, GLP-2, glicentin and oxyntomodulin. GLP-1 is further N-terminally truncated by post-translational processing in the intestinal L cells resulting in GLP-1(7-37) GLP-1-(7-36)amide. The C-terminal amidation is neither important for the metabolism of GLP-1 nor for its effects on the endocrine pancreas.

Its subcellular location is the secreted. Its function is as follows. Plays a key role in glucose metabolism and homeostasis. Regulates blood glucose by increasing gluconeogenesis and decreasing glycolysis. A counterregulatory hormone of insulin, raises plasma glucose levels in response to insulin-induced hypoglycemia. Plays an important role in initiating and maintaining hyperglycemic conditions in diabetes. In terms of biological role, potent stimulator of glucose-dependent insulin release. Also stimulates insulin release in response to IL6. Plays important roles on gastric motility and the suppression of plasma glucagon levels. May be involved in the suppression of satiety and stimulation of glucose disposal in peripheral tissues, independent of the actions of insulin. Has growth-promoting activities on intestinal epithelium. May also regulate the hypothalamic pituitary axis (HPA) via effects on LH, TSH, CRH, oxytocin, and vasopressin secretion. Increases islet mass through stimulation of islet neogenesis and pancreatic beta cell proliferation. Inhibits beta cell apoptosis. Functionally, stimulates intestinal growth and up-regulates villus height in the small intestine, concomitant with increased crypt cell proliferation and decreased enterocyte apoptosis. The gastrointestinal tract, from the stomach to the colon is the principal target for GLP-2 action. Plays a key role in nutrient homeostasis, enhancing nutrient assimilation through enhanced gastrointestinal function, as well as increasing nutrient disposal. Stimulates intestinal glucose transport and decreases mucosal permeability. Significantly reduces food intake. Inhibits gastric emptying in humans. Suppression of gastric emptying may lead to increased gastric distension, which may contribute to satiety by causing a sensation of fullness. Its function is as follows. May modulate gastric acid secretion and the gastro-pyloro-duodenal activity. May play an important role in intestinal mucosal growth in the early period of life. The sequence is that of Pro-glucagon (GCG) from Mesocricetus auratus (Golden hamster).